The chain runs to 492 residues: 5-taurinomethyluridine-[tRNA] synthase subunit GTPB3, mitochondrial (492 aa).

A mitochondrion-targeting transit peptide spans 1–20 (MWRGLWTLAAQAARGPRRLC). 5,10-methylenetetrahydrofolate contacts are provided by Arg-52, Glu-112, and Lys-152. The 168-residue stretch at 249 to 416 (GVHVVVTGPP…LLEALRKELA (168 aa)) folds into the TrmE-type G domain. GTP contacts are provided by residues 256–263 (GPPNAGKS), 282–286 (GTTRD), 303–306 (DTAG), 374–377 (NKSD), and 397–399 (SCL). Position 259 (Asn-259) interacts with K(+). Mg(2+) contacts are provided by Ser-263 and Thr-284. Residue Lys-492 participates in 5,10-methylenetetrahydrofolate binding.

This sequence belongs to the TRAFAC class TrmE-Era-EngA-EngB-Septin-like GTPase superfamily. TrmE GTPase family. As to quaternary structure, homodimer; forms a dimer in the presence of potassium. Interacts with MTO1; forms the GTPBP3-MTO1 complex composed of homodimers of GTPBP3 and MTO1. In terms of assembly, homodimer, forms homodimer in vivo. Requires K(+) as cofactor. Ubiquitously expressed.

It is found in the mitochondrion. The protein localises to the cytoplasm. The enzyme catalyses GTP + H2O = GDP + phosphate + H(+). GTPase component of the GTPBP3-MTO1 complex that catalyzes the 5-taurinomethyluridine (taum(5)U) modification at the 34th wobble position (U34) of mitochondrial tRNAs (mt-tRNAs), which plays a role in mt-tRNA decoding and mitochondrial translation. Taum(5)U formation on mammalian mt-tRNA requires the presence of both GTPBP3-mediated GTPase activity and MTO1 catalytic activity. This is 5-taurinomethyluridine-[tRNA] synthase subunit GTPB3, mitochondrial from Homo sapiens (Human).